The chain runs to 875 residues: MSGTKPDILWAPHQVDRFVVCDSELSLYHVESTVNSELKAGSLRLSEDSAATLLSINSDTPYMKCVACYLNYDPECLLAVGQANGRVVLTSLGQDHNSKFKDLIGKEFVPKHARQCNTLAWNPLDNNWLAAGLDKHRADFSVLIWDICSKYTPDIVPMEKVKLSAGETETTLLVTKPLYELGQNDACLSLCWLPRDQKLLLAGMHRNLAIFDLRNTSQKMFVNTKAVQGVTVDPYFHDRVASFYEGQVAIWDLRKFEKPVLTLTEQPKPLTKVAWCPTRTGLLATLTRDSNIIRLYDMQHTPTPIGDETEPTIIERSVQPCDNYIASFAWHPTSQNRMIVVTPNRTMSDFTVFERISLAWSPITSLMWACGRHLYECTEEENDNSLEKDIATKMRLRALSRYGLDTEQVWRNHILAGNEDPQLKSLWYTLHFMKQYTEDMDQKSPGNKGSLVYAGIKSIVKSSLGMVESSRHNWSGLDKQSDIQNLNEERILALQLCGWIKKGTDVDVGPFLNSLVQEGERERAAAVALFNLDIRRAIQILNEGASSEKGDLNLNVVAMALSGYTGEKNSLWREMCSTLRLQLNNPYLCVMFAFLTSETGSYDGVLYENKVAVRDRVAFACKFLSDTQLNRYIEKLTNEMKEAGNLEGILLTGLTKDGVDLMESYVDRTGDVQTASYCMLQGSPLDVLKDERVQYWIENYRNLLDAWRFWHKRAEFDIHRSKLDPSSKPLAQVFVSCNFCGKSISYSCSAVPHQGRGFSQYGVSGSPTKSKVTSCPGCRKPLPRCALCLINTGTPVSSCPGGTKSDEKVDLSKDKKLAQFNNWFTWCHNCRHGGHAGHMLSWFRDHAECPVSACTCKCMQLDTTGNLVPAETVQP.

WD repeat units follow at residues 61–100 (PYMKCVACYLNYDPECLLAVGQANGRVVLTSLGQDHNSKF), 111–155 (KHAR…TPDI), 182–221 (GQNDACLSLCWLPRDQKLLLAGMHRNLAIFDLRNTSQKMF), 223–261 (NTKAVQGVTVDPYFHDRVASFYEGQVAIWDLRKFEKPVL), 265–306 (EQPK…TPIG), and 395–437 (RLRA…KQYT). Residues 735–781 (VSCNFCGKSISYSCSAVPHQGRGFSQYGVSGSPTKSKVTSCPGCRKP) form a C4-type zinc finger. Positions 737 and 740 each coordinate Zn(2+). Residues S759 and S766 each carry the phosphoserine modification. C775, C778, C788, C827, C830, H832, H835, H838, C849, C854, and C858 together coordinate Zn(2+). Residues 782–863 (LPRCALCLIN…CTCKCMQLDT (82 aa)) form an RING-type; atypical zinc finger.

This sequence belongs to the WD repeat mio family. Component of the GATOR2 subcomplex, composed of MIOS, SEC13, SEH1L, WDR24 and WDR59. The GATOR2 complex interacts with CASTOR1 and CASTOR2; the interaction is negatively regulated by arginine. CASTOR1 and CASTOR2 convey leucine availability via direct interaction with MIOS. The GATOR2 complex interacts with SESN1, SESN2 and SESN3; the interaction is negatively regulated by amino acids. Interacts with SAR1A and SAR1B; the interaction is direct, disrupted by leucine and mediates the interaction of SAR1A or SAR1B with the GATOR2 complex to negatively regulate the TORC1 signaling upon leucine deprivation.

It localises to the lysosome membrane. The GATOR2 complex is negatively regulated by the upstream amino acid sensors CASTOR1 and SESN2, which sequester the GATOR2 complex in absence of amino acids. In the presence of abundant amino acids, GATOR2 is released from CASTOR1 and SESN2 and activated. As a component of the GATOR2 complex, functions as an activator of the amino acid-sensing branch of the mTORC1 signaling pathway. The GATOR2 complex indirectly activates mTORC1 through the inhibition of the GATOR1 subcomplex. GATOR2 probably acts as an E3 ubiquitin-protein ligase toward GATOR1. In the presence of abundant amino acids, the GATOR2 complex mediates ubiquitination of the NPRL2 core component of the GATOR1 complex, leading to GATOR1 inactivation. In the absence of amino acids, GATOR2 is inhibited, activating the GATOR1 complex. Within the GATOR2 complex, MIOS is required to prevent autoubiquitination of WDR24, the catalytic subunit of the complex. The GATOR2 complex is required for brain myelination. This Pongo abelii (Sumatran orangutan) protein is GATOR2 complex protein MIOS.